The chain runs to 221 residues: Elongation factor Ts (221 aa).

The tract at residues 82–85 (TDFV) is involved in Mg(2+) ion dislocation from EF-Tu.

The protein belongs to the EF-Ts family.

It is found in the cytoplasm. In terms of biological role, associates with the EF-Tu.GDP complex and induces the exchange of GDP to GTP. It remains bound to the aminoacyl-tRNA.EF-Tu.GTP complex up to the GTP hydrolysis stage on the ribosome. The chain is Elongation factor Ts from Synechococcus elongatus (strain ATCC 33912 / PCC 7942 / FACHB-805) (Anacystis nidulans R2).